Consider the following 127-residue polypeptide: Large ribosomal subunit protein bL17 (127 aa).

This sequence belongs to the bacterial ribosomal protein bL17 family. Part of the 50S ribosomal subunit. Contacts protein L32.

The chain is Large ribosomal subunit protein bL17 from Lactobacillus delbrueckii subsp. bulgaricus (strain ATCC 11842 / DSM 20081 / BCRC 10696 / JCM 1002 / NBRC 13953 / NCIMB 11778 / NCTC 12712 / WDCM 00102 / Lb 14).